Here is a 288-residue protein sequence, read N- to C-terminus: S-methyl-5'-thioadenosine phosphorylase (288 aa).

Residues Ser-12, 54 to 55 (RH), and 87 to 88 (SA) contribute to the phosphate site. Residue Met-186 participates in substrate binding. Thr-187 contacts phosphate. 210–212 (DYD) is a substrate binding site.

It belongs to the PNP/MTAP phosphorylase family. MTAP subfamily. Homohexamer. Dimer of a homotrimer.

It carries out the reaction S-methyl-5'-thioadenosine + phosphate = 5-(methylsulfanyl)-alpha-D-ribose 1-phosphate + adenine. Its pathway is amino-acid biosynthesis; L-methionine biosynthesis via salvage pathway; S-methyl-5-thio-alpha-D-ribose 1-phosphate from S-methyl-5'-thioadenosine (phosphorylase route): step 1/1. Catalyzes the reversible phosphorylation of S-methyl-5'-thioadenosine (MTA) to adenine and 5-methylthioribose-1-phosphate. Involved in the breakdown of MTA, a major by-product of polyamine biosynthesis. Responsible for the first step in the methionine salvage pathway after MTA has been generated from S-adenosylmethionine. Has broad substrate specificity with 6-aminopurine nucleosides as preferred substrates. The chain is S-methyl-5'-thioadenosine phosphorylase from Chloroflexus aurantiacus (strain ATCC 29366 / DSM 635 / J-10-fl).